Consider the following 60-residue polypeptide: MPTVNPQQLADRIDTVLDILVAGDYHSAIHNLEILKAELLAQSQQNDEPGEKKQKAPWEI.

It belongs to the UPF0509 family.

The sequence is that of UPF0509 protein ESA_01586 from Cronobacter sakazakii (strain ATCC BAA-894) (Enterobacter sakazakii).